A 460-amino-acid chain; its full sequence is GTPase Der (460 aa).

EngA-type G domains lie at 2-164 and 196-368; these read QSII…HEEF and IRVG…ENFT. Residues 8–15, 55–59, 116–119, 202–209, 249–253, and 313–316 each bind GTP; these read GKPNVGKS, DSGGL, NKVD, GRVNVGKS, DTAGI, and NKWD. A KH-like domain is found at 369–453; it reads QKIQTSKLNT…PLVIASRKKG (85 aa).

The protein belongs to the TRAFAC class TrmE-Era-EngA-EngB-Septin-like GTPase superfamily. EngA (Der) GTPase family. As to quaternary structure, associates with the 50S ribosomal subunit.

Its function is as follows. GTPase that plays an essential role in the late steps of ribosome biogenesis. This Campylobacter jejuni subsp. jejuni serotype O:23/36 (strain 81-176) protein is GTPase Der.